A 99-amino-acid polypeptide reads, in one-letter code: Nucleoid-associated protein EbfC (99 aa).

The protein belongs to the YbaB/EbfC family. In terms of assembly, homodimer.

The protein resides in the cytoplasm. It is found in the nucleoid. In terms of biological role, binds to DNA and alters its conformation. May be involved in regulation of gene expression, nucleoid organization and DNA protection. This Borrelia duttonii (strain Ly) protein is Nucleoid-associated protein EbfC.